The following is a 284-amino-acid chain: Acetylglutamate kinase (284 aa).

Substrate-binding positions include 54 to 55, R76, and N179; that span reads GG.

The protein belongs to the acetylglutamate kinase family. ArgB subfamily.

It localises to the cytoplasm. It catalyses the reaction N-acetyl-L-glutamate + ATP = N-acetyl-L-glutamyl 5-phosphate + ADP. Its pathway is amino-acid biosynthesis; L-arginine biosynthesis; N(2)-acetyl-L-ornithine from L-glutamate: step 2/4. In terms of biological role, catalyzes the ATP-dependent phosphorylation of N-acetyl-L-glutamate. This chain is Acetylglutamate kinase, found in Sorangium cellulosum (strain So ce56) (Polyangium cellulosum (strain So ce56)).